The sequence spans 454 residues: Pup--protein ligase (454 aa).

Glu-9 serves as a coordination point for Mg(2+). Residue Arg-53 coordinates ATP. Tyr-55 lines the Mg(2+) pocket. Residue Asp-57 is the Proton acceptor of the active site. Glu-63 serves as a coordination point for Mg(2+). Positions 66 and 420 each coordinate ATP.

This sequence belongs to the Pup ligase/Pup deamidase family. Pup-conjugating enzyme subfamily.

The catalysed reaction is ATP + [prokaryotic ubiquitin-like protein]-L-glutamate + [protein]-L-lysine = ADP + phosphate + N(6)-([prokaryotic ubiquitin-like protein]-gamma-L-glutamyl)-[protein]-L-lysine.. Its pathway is protein degradation; proteasomal Pup-dependent pathway. It participates in protein modification; protein pupylation. Functionally, catalyzes the covalent attachment of the prokaryotic ubiquitin-like protein modifier Pup to the proteasomal substrate proteins, thereby targeting them for proteasomal degradation. This tagging system is termed pupylation. The ligation reaction involves the side-chain carboxylate of the C-terminal glutamate of Pup and the side-chain amino group of a substrate lysine. In Pseudarthrobacter chlorophenolicus (strain ATCC 700700 / DSM 12829 / CIP 107037 / JCM 12360 / KCTC 9906 / NCIMB 13794 / A6) (Arthrobacter chlorophenolicus), this protein is Pup--protein ligase.